Consider the following 224-residue polypeptide: Ribonuclease 3 (224 aa).

In terms of domain architecture, RNase III spans 4–126 (LDRLQHKIGY…IIGAMSLDSN (123 aa)). Glu39 provides a ligand contact to Mg(2+). The active site involves Asp43. The Mg(2+) site is built by Asp112 and Glu115. Residue Glu115 is part of the active site. The DRBM domain maps to 153–223 (DPKTRLQEYL…AEQILKVLDI (71 aa)).

The protein belongs to the ribonuclease III family. As to quaternary structure, homodimer. Mg(2+) is required as a cofactor.

It is found in the cytoplasm. It carries out the reaction Endonucleolytic cleavage to 5'-phosphomonoester.. Functionally, digests double-stranded RNA. Involved in the processing of primary rRNA transcript to yield the immediate precursors to the large and small rRNAs (23S and 16S). Processes some mRNAs, and tRNAs when they are encoded in the rRNA operon. Processes pre-crRNA and tracrRNA of type II CRISPR loci if present in the organism. The sequence is that of Ribonuclease 3 from Actinobacillus succinogenes (strain ATCC 55618 / DSM 22257 / CCUG 43843 / 130Z).